The following is a 369-amino-acid chain: Mitogen-activated protein kinase 4 (369 aa).

In terms of domain architecture, Protein kinase spans 32 to 319 (YVPIKPIGRG…VTEALEHPYM (288 aa)). Residues 38–46 (IGRGAYGIV) and lysine 61 each bind ATP. Residue aspartate 158 is the Proton acceptor of the active site. Threonine 191 is modified (phosphothreonine). A TXY motif is present at residues 191–193 (TEY). Tyrosine 193 carries the post-translational modification Phosphotyrosine.

Belongs to the protein kinase superfamily. CMGC Ser/Thr protein kinase family. MAP kinase subfamily. Dually phosphorylated on Thr-191 and Tyr-193, which activates the enzyme. As to expression, expressed in leaves and panicles.

It catalyses the reaction L-seryl-[protein] + ATP = O-phospho-L-seryl-[protein] + ADP + H(+). The catalysed reaction is L-threonyl-[protein] + ATP = O-phospho-L-threonyl-[protein] + ADP + H(+). With respect to regulation, activated by threonine and tyrosine phosphorylation. The protein is Mitogen-activated protein kinase 4 (MPK4) of Oryza sativa subsp. japonica (Rice).